A 375-amino-acid polypeptide reads, in one-letter code: MTPILFVDRDGTLITEPADYQIDAYEKLRFVDHVIPAMLKLRDAGYQFVIVSNQDGLGSESFPRASFDGPNNLMLQIFASQGIEFREVLIDCSWPSDNAPTRKPGVGLMVPYLQDRTIDWARSAMVGDRITDIQFAQNLNIRGFQLRTDEFGGEWDWPGIAHELADAPRRAVVQRNTKETRIRVELDLDRVAEPKTATGLPFFDHMLEQIGKHGGFALDIRAEGDLHIDEHHTIEDTGLALGQALREALGDKRGIGRYGFDPESSPWQVAGDTAQHGFTLPMDETIASAALDFSGRPYFVFDGQFKRDRLGDMPTELVPHFFRSICDASGVNLHLTVRGENDHHKVEACFKALARALRQAIRREGSALPTTKGAL.

The interval 1-168 (MTPILFVDRD…GIAHELADAP (168 aa)) is histidinol-phosphatase. The active-site Nucleophile is the Asp-8. The Mg(2+) site is built by Asp-8, Asp-10, and Asp-128. Residue Asp-10 is the Proton donor of the active site. An imidazoleglycerol-phosphate dehydratase region spans residues 169–375 (RRAVVQRNTK…SALPTTKGAL (207 aa)).

It in the N-terminal section; belongs to the histidinol-phosphatase family. The protein in the C-terminal section; belongs to the imidazoleglycerol-phosphate dehydratase family. Mg(2+) is required as a cofactor.

It is found in the cytoplasm. The catalysed reaction is D-erythro-1-(imidazol-4-yl)glycerol 3-phosphate = 3-(imidazol-4-yl)-2-oxopropyl phosphate + H2O. It carries out the reaction L-histidinol phosphate + H2O = L-histidinol + phosphate. It participates in amino-acid biosynthesis; L-histidine biosynthesis; L-histidine from 5-phospho-alpha-D-ribose 1-diphosphate: step 6/9. It functions in the pathway amino-acid biosynthesis; L-histidine biosynthesis; L-histidine from 5-phospho-alpha-D-ribose 1-diphosphate: step 8/9. The chain is Histidine biosynthesis bifunctional protein HisB from Xanthomonas oryzae pv. oryzae (strain MAFF 311018).